Here is a 374-residue protein sequence, read N- to C-terminus: Ferroptosis suppressor protein 1 (374 aa).

Gly2 is lipidated: N-myristoyl glycine. Residues 13-35 (VVIVGGGFAGIAAASQLKSFGIP) form a helical membrane-spanning segment. 6-hydroxy-FAD contacts are provided by residues 17–21 (GGGFA), Arg53, and Val81. Lys167 carries the post-translational modification N6-acetyllysine. Asp285 is a 6-hydroxy-FAD binding site.

Belongs to the FAD-dependent oxidoreductase family. Requires 6-hydroxy-FAD as cofactor. Post-translationally, N-myristoylation at Gly-2 mediates the recruitment to lipid droplets and plasma membrane. In terms of processing, acetylation at Lys-167 prevents AIFM2 ubiquitination and degradation, thereby inhibiting ferroptosis. KAT2B mediates acetylation at Lys-167, while HDAC3 removes it. Ubiquitinated. AIFM2 undergoes 'Lys-29'-ubiquitination and proteasomal degradation, which is inhibited by acetylation at Lys-167.

The protein localises to the lipid droplet. Its subcellular location is the cell membrane. It localises to the cytoplasm. The protein resides in the mitochondrion membrane. It is found in the nucleus. The enzyme catalyses ubiquinone-10 + NADH + H(+) = ubiquinol-10 + NAD(+). It carries out the reaction phylloquinone + NADH + H(+) = phylloquinol + NAD(+). It catalyses the reaction menaquinone-4 + NADH + H(+) = menaquinol-4 + NAD(+). The catalysed reaction is menadione + NADH + H(+) = menadiol + NAD(+). The modification by 4-hydroxy-2-nonenal (HNE) adduction in mitochondria results in loss of the oxidoreductase activity and activation of a novel function in mitochondrial oxidative stress signaling. In terms of biological role, a NAD(P)H-dependent oxidoreductase that acts as a key inhibitor of ferroptosis. At the plasma membrane, catalyzes reduction of coenzyme Q/ubiquinone-10 to ubiquinol-10, a lipophilic radical-trapping antioxidant that prevents lipid oxidative damage and consequently ferroptosis. Acts in parallel to GPX4 to suppress phospholipid peroxidation and ferroptosis. This anti-ferroptotic function is independent of cellular glutathione levels. Also acts as a potent radical-trapping antioxidant by mediating warfarin-resistant vitamin K reduction in the canonical vitamin K cycle: catalyzes NAD(P)H-dependent reduction of vitamin K (phylloquinone, menaquinone-4 and menadione) to hydroquinone forms. Hydroquinones act as potent radical-trapping antioxidants inhibitor of phospholipid peroxidation and ferroptosis. May play a role in mitochondrial stress signaling. Upon oxidative stress, associates with the lipid peroxidation end product 4-hydroxy-2-nonenal (HNE) forming a lipid adduct devoid of oxidoreductase activity, which then translocates from mitochondria into the nucleus triggering DNA damage and cell death. The polypeptide is Ferroptosis suppressor protein 1 (aifm2) (Xenopus laevis (African clawed frog)).